The primary structure comprises 131 residues: MKLSDFIKTEDFKKEKHVPVIEAPEKVKKDEKVQIVVTVGKEIPHPNTTEHHIRWIKVFFQPDGDPYVYEVGRYEFNAHGESVQGPNIGAVYTEPTVTTVVKLNRSGTIIALSYCNIHGLWESSQKITVEE.

Fe cation is bound by residues Glu-15, His-17, His-45, His-51, Cys-115, and His-118.

It belongs to the desulfoferrodoxin family. Fe cation is required as a cofactor.

It carries out the reaction reduced [rubredoxin] + superoxide + 2 H(+) = oxidized [rubredoxin] + H2O2. Its function is as follows. Uses electrons from reduced NADP, by way of rubredoxin and an oxidoreductase, to catalyze the reduction of superoxide to hydrogen peroxide. The polypeptide is Putative superoxide reductase (Thermotoga maritima (strain ATCC 43589 / DSM 3109 / JCM 10099 / NBRC 100826 / MSB8)).